We begin with the raw amino-acid sequence, 71 residues long: Translation initiation factor IF-1 (71 aa).

One can recognise an S1-like domain in the interval 1–71 (MKEKNIEMQG…SKGRIIFRSR (71 aa)).

It belongs to the IF-1 family. Component of the 30S ribosomal translation pre-initiation complex which assembles on the 30S ribosome in the order IF-2 and IF-3, IF-1 and N-formylmethionyl-tRNA(fMet); mRNA recruitment can occur at any time during PIC assembly.

It localises to the cytoplasm. In terms of biological role, one of the essential components for the initiation of protein synthesis. Stabilizes the binding of IF-2 and IF-3 on the 30S subunit to which N-formylmethionyl-tRNA(fMet) subsequently binds. Helps modulate mRNA selection, yielding the 30S pre-initiation complex (PIC). Upon addition of the 50S ribosomal subunit IF-1, IF-2 and IF-3 are released leaving the mature 70S translation initiation complex. This is Translation initiation factor IF-1 from Buchnera aphidicola subsp. Cinara cedri (strain Cc).